The sequence spans 129 residues: Small ribosomal subunit protein uS8 (129 aa).

The protein belongs to the universal ribosomal protein uS8 family. As to quaternary structure, part of the 30S ribosomal subunit. Contacts proteins S5 and S12.

Functionally, one of the primary rRNA binding proteins, it binds directly to 16S rRNA central domain where it helps coordinate assembly of the platform of the 30S subunit. This Colwellia psychrerythraea (strain 34H / ATCC BAA-681) (Vibrio psychroerythus) protein is Small ribosomal subunit protein uS8.